The chain runs to 129 residues: MSNIPSDLRYATTHEWVRPEGDGTFTVGISEHAQELLGDMVFVELPDVGATVSAGDDIAVAESVKAASDVYAPIGGEIVGVNEDLEDSPELVNSDPYGDGWLFRIKADDADEVEGLLDAEGYENSIEEE.

One can recognise a Lipoyl-binding domain in the interval 24–106; the sequence is TFTVGISEHA…YGDGWLFRIK (83 aa). Lys-65 is subject to N6-lipoyllysine.

This sequence belongs to the GcvH family. As to quaternary structure, the glycine cleavage system is composed of four proteins: P, T, L and H. (R)-lipoate serves as cofactor.

In terms of biological role, the glycine cleavage system catalyzes the degradation of glycine. The H protein shuttles the methylamine group of glycine from the P protein to the T protein. This Pseudoalteromonas atlantica (strain T6c / ATCC BAA-1087) protein is Glycine cleavage system H protein.